The following is a 490-amino-acid chain: GTPase Der (490 aa).

EngA-type G domains follow at residues 3-166 and 203-376; these read PVVA…MDDV and IKLA…DSST. GTP is bound by residues 9 to 16, 56 to 60, 118 to 121, 209 to 216, 256 to 260, and 321 to 324; these read GRPNVGKS, DTGGI, NKTD, DTAGV, and NKWD. The KH-like domain occupies 377 to 461; sequence RRVSTAMLTR…PIRIQFKEGE (85 aa).

The protein belongs to the TRAFAC class TrmE-Era-EngA-EngB-Septin-like GTPase superfamily. EngA (Der) GTPase family. Associates with the 50S ribosomal subunit.

In terms of biological role, GTPase that plays an essential role in the late steps of ribosome biogenesis. This Salmonella gallinarum (strain 287/91 / NCTC 13346) protein is GTPase Der.